The sequence spans 395 residues: 3-sulfinopropanoyl-CoA desulfinase (395 aa).

Residues 121-124, serine 130, and 153-156 contribute to the FAD site; these read ICIS and YWIT. Residue 243–244 participates in substrate binding; sequence YN. FAD contacts are provided by residues arginine 272, glutamine 339, serine 343, 366 to 370, and glutamine 387; that span reads GGTAQ.

Belongs to the acyl-CoA dehydrogenase family. Homotrimer or homotetramer. FAD is required as a cofactor.

It catalyses the reaction 3-sulfinopropanoyl-CoA + H2O = propanoyl-CoA + sulfite + H(+). Its function is as follows. Catalyzes the conversion 3-sulfinopropanoyl-CoA (3SP-CoA) to propanoyl-CoA by abstraction of sulfite. Does not show dehydrogenase activity. This Cupriavidus necator (strain ATCC 43291 / DSM 13513 / CCUG 52238 / LMG 8453 / N-1) (Ralstonia eutropha) protein is 3-sulfinopropanoyl-CoA desulfinase.